Here is a 284-residue protein sequence, read N- to C-terminus: NAD kinase (284 aa).

The active-site Proton acceptor is D61. Residues 61-62, R66, 136-137, R147, K164, D166, and L201 each bind NAD(+); these read DG and ND.

It belongs to the NAD kinase family. A divalent metal cation serves as cofactor.

The protein localises to the cytoplasm. The enzyme catalyses NAD(+) + ATP = ADP + NADP(+) + H(+). Its function is as follows. Involved in the regulation of the intracellular balance of NAD and NADP, and is a key enzyme in the biosynthesis of NADP. Catalyzes specifically the phosphorylation on 2'-hydroxyl of the adenosine moiety of NAD to yield NADP. This is NAD kinase from Dehalococcoides mccartyi (strain ATCC BAA-2100 / JCM 16839 / KCTC 5957 / BAV1).